The primary structure comprises 147 residues: Probable disulfide formation protein (147 aa).

A helical membrane pass occupies residues 9–28 (NYSLYFAWLTALIATLGSLY). An intrachain disulfide couples Cys38 to Cys41. A run of 2 helical transmembrane segments spans residues 43–62 (YQRV…AYRT) and 69–86 (YALP…YQYL). An intrachain disulfide couples Cys99 to Cys106. The chain crosses the membrane as a helical span at residues 115-138 (GFITLPFLGMLATLIMSFFLIMAF).

This sequence belongs to the DsbB family. BdbC subfamily.

The protein resides in the cell inner membrane. Its function is as follows. Required for disulfide bond formation in some proteins. The chain is Probable disulfide formation protein from Coxiella burnetii (strain CbuK_Q154) (Coxiella burnetii (strain Q154)).